The chain runs to 363 residues: Forkhead box protein I1 (363 aa).

Positions 1–18 are enriched in low complexity; it reads MNPVQQPAQQRSPASSLP. 3 disordered regions span residues 1–24, 210–269, and 344–363; these read MNPV…KRAQ, DNGN…SPPA, and TTAQ…QGRY. Residues 125 to 219 constitute a DNA-binding region (fork-head); it reads RPPYSYSALI…DNGNFRRKRK (95 aa). The span at 231–243 shows a compositional bias: basic and acidic residues; it reads KIGEDHLNPKGKE. Low complexity-rich tracts occupy residues 244–258 and 347–363; these read SPPM…EPSP and QKQP…QGRY.

It is found in the nucleus. Functionally, transcription factor. Essential for ventral specification of the early cephalic (head) ectoderm during gastrulation, playing a role in the 'non-neural' versus 'neural' cell fate choice. Binds to DNA via the target sequence 5'-[AG]TAAA[CT]A-3', with 5'-ATAAACA-3' being the preferred binding site. This Xenopus tropicalis (Western clawed frog) protein is Forkhead box protein I1.